Reading from the N-terminus, the 152-residue chain is 3-hydroxyacyl-[acyl-carrier-protein] dehydratase FabZ (152 aa).

His-58 is an active-site residue.

Belongs to the thioester dehydratase family. FabZ subfamily.

The protein localises to the cytoplasm. It carries out the reaction a (3R)-hydroxyacyl-[ACP] = a (2E)-enoyl-[ACP] + H2O. In terms of biological role, involved in unsaturated fatty acids biosynthesis. Catalyzes the dehydration of short chain beta-hydroxyacyl-ACPs and long chain saturated and unsaturated beta-hydroxyacyl-ACPs. The chain is 3-hydroxyacyl-[acyl-carrier-protein] dehydratase FabZ from Prochlorococcus marinus (strain MIT 9515).